The sequence spans 1070 residues: DNA-directed RNA polymerase subunit beta (1070 aa).

Belongs to the RNA polymerase beta chain family. In plastids the minimal PEP RNA polymerase catalytic core is composed of four subunits: alpha, beta, beta', and beta''. When a (nuclear-encoded) sigma factor is associated with the core the holoenzyme is formed, which can initiate transcription.

It localises to the plastid. The protein resides in the chloroplast. The enzyme catalyses RNA(n) + a ribonucleoside 5'-triphosphate = RNA(n+1) + diphosphate. In terms of biological role, DNA-dependent RNA polymerase catalyzes the transcription of DNA into RNA using the four ribonucleoside triphosphates as substrates. The protein is DNA-directed RNA polymerase subunit beta of Cucumis sativus (Cucumber).